The following is a 236-amino-acid chain: Small ribosomal subunit protein uS2c (236 aa).

It belongs to the universal ribosomal protein uS2 family.

It is found in the plastid. The protein localises to the chloroplast. This chain is Small ribosomal subunit protein uS2c (rps2), found in Lolium perenne (Perennial ryegrass).